Here is a 159-residue protein sequence, read N- to C-terminus: Succinate dehydrogenase [ubiquinone] cytochrome b small subunit, mitochondrial (159 aa).

The N-terminal 30 residues, 1 to 30 (MLQTRLGLGALRQGRLLFAVKSFSTTSVAK), are a transit peptide targeting the mitochondrion. Topologically, residues 31-65 (IFPPPPQTIKGTVNDAAVFPHHSKLHGSYHWDFER) are mitochondrial matrix. The helical transmembrane segment at 66-82 (IIAIAMVPQVMIPLFTG) threads the bilayer. Topologically, residues 83 to 89 (TSHPLMD) are mitochondrial intermembrane. The chain crosses the membrane as a helical span at residues 90–109 (AALACTLITHAHLGFESCVI). H99 is a binding site for heme. At 110–122 (DYFPARRFKKLSP) the chain is on the mitochondrial matrix side. Y111 provides a ligand contact to a ubiquinone. The helical transmembrane segment at 123 to 140 (LMHWILRGCTVLTLIGVY) threads the bilayer. Residues 141–159 (EFNTNDIGLTEGIKKLWKS) are Mitochondrial intermembrane-facing.

This sequence belongs to the CybS family. As to quaternary structure, forms part of complex II containing four subunits: a flavoprotein (FP), an iron-sulfur protein (IP) and a cytochrome b composed of a large and a small subunit.

The protein localises to the mitochondrion inner membrane. The protein operates within carbohydrate metabolism; tricarboxylic acid cycle. Its function is as follows. Membrane-anchoring subunit of succinate dehydrogenase (SDH) that is involved in complex II of the mitochondrial electron transport chain and is responsible for transferring electrons from succinate to ubiquinone (coenzyme Q). This chain is Succinate dehydrogenase [ubiquinone] cytochrome b small subunit, mitochondrial (sdh4), found in Schizosaccharomyces pombe (strain 972 / ATCC 24843) (Fission yeast).